We begin with the raw amino-acid sequence, 848 residues long: Glutenin, high molecular weight subunit DX5 (848 aa).

A signal peptide spans 1–21 (MAKRLVLFVAVVVALVALTVA). A disordered region spans residues 124 to 804 (YYPGQASPQR…GQQSGQGQQG (681 aa)). Low complexity-rich tracts occupy residues 126–137 (PGQASPQRPGQG), 145–166 (QGYYPTSPQQPGQWQQPEQGQP), 173–203 (PQQSGQLQQPAQGQQPGQGQQGQQPGQGQPG), 210–240 (QLQPGQLQQPAQGQQGQQPGQAQQGQQPGQG), 263–303 (QGQQ…GQSG), 310–351 (QQPG…PGQG), 359–411 (PGYY…PGQG), 419–468 (PGYY…PGQG), 476–527 (QGQQ…YPTS), 544–659 (QQPG…QGQP), 670–687 (GQGQQPGQWQQPGQGQPG), 709–727 (QQPGQGQQPGQWQQSGQGQ), and 739–795 (GQGQ…TGQG).

The protein belongs to the gliadin/glutenin family. As to quaternary structure, disulfide-bridge linked aggregates.

Its function is as follows. Glutenins are high-molecular weight seed storage proteins of wheat endosperm. Thought to be responsible for the visco-elastic property of wheat dough. The polypeptide is Glutenin, high molecular weight subunit DX5 (GLU-1D-1D) (Triticum aestivum (Wheat)).